The sequence spans 158 residues: Transcription elongation factor GreA (158 aa).

Positions 47–74 form a coiled coil; it reads AEYHAAKEEQSHNEGRINELEDKLARAD.

It belongs to the GreA/GreB family.

In terms of biological role, necessary for efficient RNA polymerase transcription elongation past template-encoded arresting sites. The arresting sites in DNA have the property of trapping a certain fraction of elongating RNA polymerases that pass through, resulting in locked ternary complexes. Cleavage of the nascent transcript by cleavage factors such as GreA or GreB allows the resumption of elongation from the new 3'terminus. GreA releases sequences of 2 to 3 nucleotides. The polypeptide is Transcription elongation factor GreA (Rhodopseudomonas palustris (strain ATCC BAA-98 / CGA009)).